The sequence spans 385 residues: NADH-quinone oxidoreductase subunit D 2 (385 aa).

The protein belongs to the complex I 49 kDa subunit family. NDH-1 is composed of 14 different subunits. Subunits NuoB, C, D, E, F, and G constitute the peripheral sector of the complex.

The protein resides in the cell membrane. The enzyme catalyses a quinone + NADH + 5 H(+)(in) = a quinol + NAD(+) + 4 H(+)(out). Functionally, NDH-1 shuttles electrons from NADH, via FMN and iron-sulfur (Fe-S) centers, to quinones in the respiratory chain. The immediate electron acceptor for the enzyme in this species is believed to be a menaquinone. Couples the redox reaction to proton translocation (for every two electrons transferred, four hydrogen ions are translocated across the cytoplasmic membrane), and thus conserves the redox energy in a proton gradient. The polypeptide is NADH-quinone oxidoreductase subunit D 2 (Salinispora arenicola (strain CNS-205)).